The chain runs to 521 residues: Maturase K (521 aa).

It belongs to the intron maturase 2 family. MatK subfamily.

The protein localises to the plastid. It localises to the chloroplast. Functionally, usually encoded in the trnK tRNA gene intron. Probably assists in splicing its own and other chloroplast group II introns. This Trillium catesbaei (Catesby's trillium) protein is Maturase K.